Here is a 132-residue protein sequence, read N- to C-terminus: Ribonuclease VapC15 (132 aa).

The PINc domain maps to 1–121 (MIVDTSVWIA…HRDRDYEAIR (121 aa)). Asp-96 is a Mg(2+) binding site. 3 residues coordinate Mn(2+): Asp-96, Asp-114, and Asp-116.

The protein belongs to the PINc/VapC protein family. In terms of assembly, crystallizes as a VapB15-VapC15(2) heterotrimer and as a VapB15(2)-VapC15(2) heterotetramer; each toxin pair forms a homodimer which creates a channel in which the antitoxin binds. Requires Mg(2+) as cofactor. It depends on Mn(2+) as a cofactor.

RNase activity inhibited by EDTA. Its function is as follows. Toxic component of a type II toxin-antitoxin (TA) system. Degrades total E.coli RNA, which is partially inhibited by cognate antitoxin VapB15. Upon expression in M.smegmatis inhibits colony formation, which is neutralized by coexpression with VapB15. The protein is Ribonuclease VapC15 of Mycobacterium tuberculosis (strain ATCC 25618 / H37Rv).